A 367-amino-acid chain; its full sequence is Heme A synthase (367 aa).

The next 8 helical transmembrane spans lie at alanine 25 to glycine 45, leucine 111 to glycine 131, tryptophan 139 to valine 159, leucine 174 to glycine 194, glycine 210 to alanine 230, phenylalanine 272 to alanine 292, alanine 305 to methionine 325, and valine 327 to valine 347. Histidine 274 contacts heme. Histidine 335 provides a ligand contact to heme.

This sequence belongs to the COX15/CtaA family. Type 2 subfamily. Interacts with CtaB. Requires heme b as cofactor.

It localises to the cell membrane. It carries out the reaction Fe(II)-heme o + 2 A + H2O = Fe(II)-heme a + 2 AH2. It functions in the pathway porphyrin-containing compound metabolism; heme A biosynthesis; heme A from heme O: step 1/1. Functionally, catalyzes the conversion of heme O to heme A by two successive hydroxylations of the methyl group at C8. The first hydroxylation forms heme I, the second hydroxylation results in an unstable dihydroxymethyl group, which spontaneously dehydrates, resulting in the formyl group of heme A. This is Heme A synthase from Rhizobium etli (strain ATCC 51251 / DSM 11541 / JCM 21823 / NBRC 15573 / CFN 42).